We begin with the raw amino-acid sequence, 625 residues long: 1-deoxy-D-xylulose-5-phosphate synthase (625 aa).

Thiamine diphosphate contacts are provided by residues His84 and 125 to 127 (GHS). Asp156 is a binding site for Mg(2+). Residues 157–158 (GA), Asn185, Phe292, and Glu373 each bind thiamine diphosphate. Mg(2+) is bound at residue Asn185.

Belongs to the transketolase family. DXPS subfamily. Homodimer. Mg(2+) serves as cofactor. The cofactor is thiamine diphosphate.

It carries out the reaction D-glyceraldehyde 3-phosphate + pyruvate + H(+) = 1-deoxy-D-xylulose 5-phosphate + CO2. It functions in the pathway metabolic intermediate biosynthesis; 1-deoxy-D-xylulose 5-phosphate biosynthesis; 1-deoxy-D-xylulose 5-phosphate from D-glyceraldehyde 3-phosphate and pyruvate: step 1/1. In terms of biological role, catalyzes the acyloin condensation reaction between C atoms 2 and 3 of pyruvate and glyceraldehyde 3-phosphate to yield 1-deoxy-D-xylulose-5-phosphate (DXP). The protein is 1-deoxy-D-xylulose-5-phosphate synthase of Marinomonas sp. (strain MWYL1).